The chain runs to 265 residues: Probable cyclic nucleotide phosphodiesterase SynWH7803_1390 (265 aa).

Positions 9, 11, 49, 86, 157, 196, and 198 each coordinate Fe cation. Residues H11, D49, and 86 to 87 (NH) contribute to the AMP site. H198 serves as a coordination point for AMP.

The protein belongs to the cyclic nucleotide phosphodiesterase class-III family. Requires Fe(2+) as cofactor.

This is Probable cyclic nucleotide phosphodiesterase SynWH7803_1390 from Synechococcus sp. (strain WH7803).